The following is a 641-amino-acid chain: Threonine--tRNA ligase (641 aa).

The 61-residue stretch at 1–61 folds into the TGS domain; sequence MPIITLPDGT…TQNSHIQIIT (61 aa). The catalytic stretch occupies residues 242–533; sequence DHRKLGKKYS…LIENYSGNFP (292 aa). The Zn(2+) site is built by C333, H384, and H510.

Belongs to the class-II aminoacyl-tRNA synthetase family. Homodimer. It depends on Zn(2+) as a cofactor.

The protein localises to the cytoplasm. It catalyses the reaction tRNA(Thr) + L-threonine + ATP = L-threonyl-tRNA(Thr) + AMP + diphosphate + H(+). In terms of biological role, catalyzes the attachment of threonine to tRNA(Thr) in a two-step reaction: L-threonine is first activated by ATP to form Thr-AMP and then transferred to the acceptor end of tRNA(Thr). Also edits incorrectly charged L-seryl-tRNA(Thr). In Prochlorococcus marinus (strain NATL2A), this protein is Threonine--tRNA ligase.